Consider the following 442-residue polypeptide: D-serine dehydratase (442 aa).

An N6-(pyridoxal phosphate)lysine modification is found at Lys118.

This sequence belongs to the serine/threonine dehydratase family. DsdA subfamily. In terms of assembly, monomer. Pyridoxal 5'-phosphate is required as a cofactor.

It catalyses the reaction D-serine = pyruvate + NH4(+). The chain is D-serine dehydratase from Shigella flexneri serotype 5b (strain 8401).